The following is a 223-amino-acid chain: Capsid protein (223 aa).

Positions 1-19 (MDDETKKLKNKNKETKEGD) are enriched in basic and acidic residues. The interval 1–21 (MDDETKKLKNKNKETKEGDDV) is disordered.

Belongs to the closteroviridae capsid protein family. Post-translationally, consists of at least two size variants, CP1 and CP2, which result of post-translational proteolysis at sites approximately 12 to 15 and 26 AA from the N-terminus respectively.

It is found in the virion. In Citrus tristeza virus (isolate T36) (CTV), this protein is Capsid protein.